The chain runs to 209 residues: Inorganic pyrophosphatase (209 aa).

Substrate contacts are provided by lysine 38, arginine 52, and tyrosine 64. The Mg(2+) site is built by aspartate 92, aspartate 97, and aspartate 130. Residue tyrosine 167 participates in substrate binding.

It belongs to the PPase family. As to quaternary structure, homohexamer. It depends on Mg(2+) as a cofactor.

It localises to the cytoplasm. It catalyses the reaction diphosphate + H2O = 2 phosphate + H(+). Functionally, catalyzes the hydrolysis of inorganic pyrophosphate (PPi) forming two phosphate ions. The sequence is that of Inorganic pyrophosphatase from Chlamydia muridarum (strain MoPn / Nigg).